We begin with the raw amino-acid sequence, 83 residues long: ATP synthase subunit c, chloroplastic (83 aa).

The next 2 helical transmembrane spans lie at Pro-3–Gly-23 and Phe-57–Ala-77.

The protein belongs to the ATPase C chain family. In terms of assembly, F-type ATPases have 2 components, F(1) - the catalytic core - and F(0) - the membrane proton channel. F(1) has five subunits: alpha(3), beta(3), gamma(1), delta(1), epsilon(1). F(0) has four main subunits: a(1), b(1), b'(1) and c(10-14). The alpha and beta chains form an alternating ring which encloses part of the gamma chain. F(1) is attached to F(0) by a central stalk formed by the gamma and epsilon chains, while a peripheral stalk is formed by the delta, b and b' chains.

It localises to the plastid. It is found in the chloroplast thylakoid membrane. In terms of biological role, f(1)F(0) ATP synthase produces ATP from ADP in the presence of a proton or sodium gradient. F-type ATPases consist of two structural domains, F(1) containing the extramembraneous catalytic core and F(0) containing the membrane proton channel, linked together by a central stalk and a peripheral stalk. During catalysis, ATP synthesis in the catalytic domain of F(1) is coupled via a rotary mechanism of the central stalk subunits to proton translocation. Functionally, key component of the F(0) channel; it plays a direct role in translocation across the membrane. A homomeric c-ring of between 10-14 subunits forms the central stalk rotor element with the F(1) delta and epsilon subunits. The sequence is that of ATP synthase subunit c, chloroplastic from Oedogonium cardiacum (Filamentous green alga).